A 329-amino-acid polypeptide reads, in one-letter code: Ribosomal protein L11 methyltransferase (329 aa).

The S-adenosyl-L-methionine site is built by T177, G198, D220, and N264.

This sequence belongs to the methyltransferase superfamily. PrmA family.

It is found in the cytoplasm. The catalysed reaction is L-lysyl-[protein] + 3 S-adenosyl-L-methionine = N(6),N(6),N(6)-trimethyl-L-lysyl-[protein] + 3 S-adenosyl-L-homocysteine + 3 H(+). Its function is as follows. Methylates ribosomal protein L11. This Helicobacter pylori (strain J99 / ATCC 700824) (Campylobacter pylori J99) protein is Ribosomal protein L11 methyltransferase.